The sequence spans 143 residues: Large ribosomal subunit protein bL17 (143 aa).

It belongs to the bacterial ribosomal protein bL17 family. Part of the 50S ribosomal subunit. Contacts protein L32.

This chain is Large ribosomal subunit protein bL17, found in Chelativorans sp. (strain BNC1).